Reading from the N-terminus, the 361-residue chain is Trans-2,3-enoyl-CoA reductase-like (361 aa).

Phosphoserine is present on residues Ser33 and Ser35. Transmembrane regions (helical) follow at residues 139–159 (VGWT…YLLF), 181–201 (VHLA…ETLF), 215–235 (LIKG…YINH), and 309–329 (ISFT…LMTI).

It belongs to the steroid 5-alpha reductase family. Expression is highest in the heart with very low to almost undetectable levels in brain, skeletal muscle, stomach, pancreas, liver, kidney, small intestine, and uterus.

The protein localises to the membrane. Its subcellular location is the endoplasmic reticulum. This Mus musculus (Mouse) protein is Trans-2,3-enoyl-CoA reductase-like (Tecrl).